The primary structure comprises 152 residues: MDPGTEEYELNGDLRPGSPGSPDASPPRWGLRNRPINVNHYANKKSAAESMLDIALLMANASQLKAVVEQGNEFAFFVPLVVLISISLVLQIGVGVLLIFLVKYDLNNPAKHAKLDFLNNLATGLVFIIVVVNIFITAFGVQKPVMDVAPRQ.

At methionine 1 the chain carries N-acetylmethionine. Acidic residues predominate over residues 1–10; the sequence is MDPGTEEYEL. The segment at 1–30 is disordered; it reads MDPGTEEYELNGDLRPGSPGSPDASPPRWG. Topologically, residues 1–78 are extracellular; sequence MDPGTEEYEL…EQGNEFAFFV (78 aa). Residues 16–27 are compositionally biased toward low complexity; it reads PGSPGSPDASPP. Residues serine 18, serine 21, and serine 25 each carry the phosphoserine modification. The tract at residues 26 to 37 is N-terminal adhesion motif; sequence PPRWGLRNRPIN. The interval 40–69 is required to induce plasma membrane rupture; that stretch reads HYANKKSAAESMLDIALLMANASQLKAVVE. Positions 44-55 are helix alpha1; the sequence is KKSAAESMLDIA. Positions 58–74 are helix alpha2; it reads MANASQLKAVVEQGNEF. N-linked (GlcNAc...) asparagine glycosylation is present at asparagine 60. Residues 79–103 traverse the membrane as a helical segment; the sequence is PLVVLISISLVLQIGVGVLLIFLVK. Topologically, residues 104–113 are cytoplasmic; it reads YDLNNPAKHA. Residues 114–138 traverse the membrane as a helical segment; it reads KLDFLNNLATGLVFIIVVVNIFITA. Over 139–152 the chain is Extracellular; that stretch reads FGVQKPVMDVAPRQ.

This sequence belongs to the ninjurin family. Homodimer; in absence of death stimuli, forms an inactive homodimer. Homooligomer; in response to death stimuli, homooligomerizes into long, highly branched filaments and large, ring-shaped structures in the membrane. The topology shown in the entry corresponds to the activated form. In terms of processing, cleaved by MMP9 protease to generate the Secreted ninjurin-1 form. N-linked glycosylation is required for homooligomerization.

It localises to the cell membrane. The protein resides in the synaptic cell membrane. The protein localises to the secreted. With respect to regulation, in response to death stimuli, homooligomerizes and disrupts membrane integrity by introducing the hydrophilic faces of alpha1 and alpha2 helices into the hydrophobic membrane. Homooligomerization and ability to mediate plasma membrane rupture is inhibited by glycine; it is unclear whether glycine directly or indirectly inhibits homooligomerization. In normal conditions, NINJ1 is autoinhibited via formation of a homodimer: in the inactive homodimer, the alpha1 and alpha2 helices (residues 44-74) form a single transmembrane region without a kink, in which hydrophilic faces of alpha1 and alpha2 helices are sequestered. In terms of biological role, effector of various programmed cell death, such as pyroptosis and necroptosis, which mediates plasma membrane rupture (cytolysis). Oligomerizes in response to death stimuli and forms ring-like structures on the plasma membrane: acts by cutting and shedding membrane disks, like a cookie cutter, leading to membrane damage and loss that cannot be repaired by the cell. Plasma membrane rupture leads to release intracellular molecules named damage-associated molecular patterns (DAMPs) that propagate the inflammatory response. Mechanistically, mediates plasma membrane rupture by introducing hydrophilic faces of 2 alpha helices into the hydrophobic membrane. Induces plasma membrane rupture downstream of Gasdermin (GSDMA, GSDMB, GSDMC, GSDMD, or GSDME) or MLKL during pyroptosis or necroptosis, respectively. Acts as an effector of PANoptosis downstream of CASP1, CASP4, CASP8 and RIPK3. Also induces plasma membrane rupture in response to cell swelling caused by osmotic stress and ferroptosis downstream of lipid peroxidation. Acts as a regulator of Toll-like receptor 4 (TLR4) signaling triggered by lipopolysaccharide (LPS) during systemic inflammation; directly binds LPS. Involved in leukocyte migration during inflammation by promoting transendothelial migration of macrophages via homotypic binding. Promotes the migration of monocytes across the brain endothelium to central nervous system inflammatory lesions. Also acts as a homophilic transmembrane adhesion molecule involved in various processes such as axonal growth, cell chemotaxis and angiogenesis. Promotes cell adhesion by mediating homophilic interactions via its extracellular N-terminal adhesion motif (N-NAM). Involved in the progression of the inflammatory stress by promoting cell-to-cell interactions between immune cells and endothelial cells. Plays a role in nerve regeneration by promoting maturation of Schwann cells. Acts as a regulator of angiogenesis. Promotes the formation of new vessels by mediating the interaction between capillary pericyte cells and endothelial cells. Promotes osteoclasts development by enhancing the survival of prefusion osteoclasts. Also involved in striated muscle growth and differentiation. Secreted form generated by cleavage, which has chemotactic activity. Acts as an anti-inflammatory mediator by promoting monocyte recruitment, thereby ameliorating atherosclerosis. The protein is Ninjurin-1 of Rattus norvegicus (Rat).